Consider the following 318-residue polypeptide: UDP-3-O-acylglucosamine N-acyltransferase 1 (318 aa).

Residue His230 is the Proton acceptor of the active site.

This sequence belongs to the transferase hexapeptide repeat family. LpxD subfamily. Homotrimer.

It catalyses the reaction a UDP-3-O-[(3R)-3-hydroxyacyl]-alpha-D-glucosamine + a (3R)-hydroxyacyl-[ACP] = a UDP-2-N,3-O-bis[(3R)-3-hydroxyacyl]-alpha-D-glucosamine + holo-[ACP] + H(+). It participates in bacterial outer membrane biogenesis; LPS lipid A biosynthesis. Its function is as follows. Catalyzes the N-acylation of UDP-3-O-acylglucosamine using 3-hydroxyacyl-ACP as the acyl donor. Is involved in the biosynthesis of lipid A, a phosphorylated glycolipid that anchors the lipopolysaccharide to the outer membrane of the cell. The polypeptide is UDP-3-O-acylglucosamine N-acyltransferase 1 (Sulfurimonas denitrificans (strain ATCC 33889 / DSM 1251) (Thiomicrospira denitrificans (strain ATCC 33889 / DSM 1251))).